The chain runs to 443 residues: Ribulose bisphosphate carboxylase large chain (443 aa).

2 residues coordinate substrate: asparagine 89 and threonine 139. The active-site Proton acceptor is lysine 141. Substrate is bound at residue lysine 143. 3 residues coordinate Mg(2+): lysine 167, aspartate 169, and glutamate 170. The residue at position 167 (lysine 167) is an N6-carboxylysine. The active-site Proton acceptor is the histidine 260. Substrate is bound by residues arginine 261, histidine 293, and serine 345.

This sequence belongs to the RuBisCO large chain family. Type I subfamily. Heterohexadecamer of 8 large chains and 8 small chains; disulfide-linked. The disulfide link is formed within the large subunit homodimers. Mg(2+) is required as a cofactor. In terms of processing, the disulfide bond which can form in the large chain dimeric partners within the hexadecamer appears to be associated with oxidative stress and protein turnover.

It is found in the plastid. It localises to the chloroplast. The catalysed reaction is 2 (2R)-3-phosphoglycerate + 2 H(+) = D-ribulose 1,5-bisphosphate + CO2 + H2O. It carries out the reaction D-ribulose 1,5-bisphosphate + O2 = 2-phosphoglycolate + (2R)-3-phosphoglycerate + 2 H(+). Its function is as follows. RuBisCO catalyzes two reactions: the carboxylation of D-ribulose 1,5-bisphosphate, the primary event in carbon dioxide fixation, as well as the oxidative fragmentation of the pentose substrate in the photorespiration process. Both reactions occur simultaneously and in competition at the same active site. The protein is Ribulose bisphosphate carboxylase large chain of Villarsia calthifolia (Marsh flower).